Consider the following 75-residue polypeptide: MNKLAILAIIAMVLFSANAFRFQSRIRSNVEAKTETRDLCEQSALQCNEQGCHNFCSPEDKPGCLGMVWNPELCP.

An N-terminal signal peptide occupies residues 1–19 (MNKLAILAIIAMVLFSANA). A propeptide spanning residues 20–37 (FRFQSRIRSNVEAKTETR) is cleaved from the precursor. 3 disulfides stabilise this stretch: cysteine 40/cysteine 56, cysteine 47/cysteine 74, and cysteine 52/cysteine 64.

Homodimer.

It localises to the secreted. Mating ciliate pheromones (or gamones) are diffusible extracellular communication signals that distinguish different intraspecific classes of cells commonly referred to as 'mating types'. They prepare the latter for conjugation by changing their cell surface properties. The polypeptide is Mating pheromone Er-10 (MAT10) (Euplotes raikovi).